The chain runs to 306 residues: 26S proteasome regulatory subunit RPN11 (306 aa).

The 136-residue stretch at 27 to 162 (VYISSIALLK…IDAFRLIDTG (136 aa)) folds into the MPN domain. H109, H111, and D122 together coordinate Zn(2+). The JAMM motif signature appears at 109 to 122 (HSHPGFGCWLSSVD).

Belongs to the peptidase M67A family.

Functionally, acts as a regulatory subunit of the 26 proteasome which is involved in the ATP-dependent degradation of ubiquitinated proteins. The chain is 26S proteasome regulatory subunit RPN11 (RPN11) from Candida glabrata (strain ATCC 2001 / BCRC 20586 / JCM 3761 / NBRC 0622 / NRRL Y-65 / CBS 138) (Yeast).